Reading from the N-terminus, the 539-residue chain is Inositol 1,4,5-triphosphate receptor associated 2 (539 aa).

3 disordered regions span residues 1-21 (MLCVKGPPEQEPEDGALDVTR), 69-98 (YLTQPSSEQTSSSESTVTSSESGSDILHMA), and 147-171 (AGEELRTTENGGKGSAPGETEISMP). Over 1-479 (MLCVKGPPEQ…LQASFRRANR (479 aa)) the chain is Cytoplasmic. A compositionally biased stretch (low complexity) spans 74–92 (SSEQTSSSESTVTSSESGS). Threonine 78 is modified (phosphothreonine). A coiled-coil region spans residues 298-326 (MIQHVENLKRMYAKEHAELEDLKQALLQN). Residues 334–353 (PDEDDCQIKKRSSSLNSKPS) are disordered. 3 positions are modified to phosphoserine: serine 347, serine 354, and serine 408. The interval 418–449 (ERSDVKARDAPEPQGEEAVERTRKPSLSERRS) is disordered. Residues 435 to 449 (AVERTRKPSLSERRS) are compositionally biased toward basic and acidic residues. A helical; Anchor for type IV membrane protein membrane pass occupies residues 480–500 (ALWLTGLIIILIAALMSFLTG). The Lumenal portion of the chain corresponds to 501-539 (QLFQTAVEAAPTQEGDSWLSLEHILWPFTRLGHDGPPPV).

This sequence belongs to the IRAG2 family. Interacts (via coiled-coil domain) with ITPR3. Interacts with SUN1 and SUN2. Interacts with microtubules. Interacts with HCN4; regulates HCN4 channel activity. In terms of processing, the removal of the C-terminal lumenal domain occurs by proteolytic processing. In terms of tissue distribution, spleen and thymus. Expressed at high levels in pre B-cells, mature B-cells and pre T-cells. Expressed at low levels in mature T-cells and plasma B-cells. Expressed in circumvallate (CV), foliate (FL) and fungiform (FF) taste papillae cells of the tongue epithelium.

It is found in the cytoplasm. Its subcellular location is the endoplasmic reticulum membrane. It localises to the nucleus envelope. The protein localises to the cytoskeleton. The protein resides in the microtubule organizing center. It is found in the centrosome. Its subcellular location is the spindle pole. It localises to the chromosome. Functionally, plays a role in the delivery of peptides to major histocompatibility complex (MHC) class I molecules; this occurs in a transporter associated with antigen processing (TAP)-independent manner. May play a role in taste signal transduction via ITPR3. May play a role during fertilization in pronucleus congression and fusion. Plays a role in maintaining nuclear shape, maybe as a component of the LINC complex and through interaction with microtubules. Plays a role in the regulation of cellular excitability by regulating the hyperpolarization-activated cyclic nucleotide-gated HCN4 channel activity. The sequence is that of Inositol 1,4,5-triphosphate receptor associated 2 (Irag2) from Mus musculus (Mouse).